A 612-amino-acid polypeptide reads, in one-letter code: Kelch-like protein 40a (612 aa).

One can recognise a BTB domain in the interval 34 to 101 (VDCILKIKDK…IYTSDINLTE (68 aa)). The BACK domain maps to 136-238 (CLAIFRLGLL…PTSYFKEKVE (103 aa)). The segment covering 266 to 275 (RVKRSSHRKE) has biased composition (basic residues). The segment at 266 to 290 (RVKRSSHRKEGKSAEFESDDDDEDG) is disordered. The segment covering 281–290 (FESDDDDEDG) has biased composition (acidic residues). 5 Kelch repeats span residues 350 to 402 (QIFV…EAEN), 403 to 452 (SIYV…SHKG), 453 to 500 (LVYV…VHKN), 502 to 547 (IYVV…ELGG), and 549 to 604 (LYAI…GVRL).

Belongs to the KLHL40 family. As to quaternary structure, component of the BCR(KLHL40) E3 ubiquitin ligase complex. In terms of tissue distribution, expressed in skeletal muscle and heart. Detected, although at much lower levels, in brain, eye and fin.

The protein localises to the cytoplasm. Its subcellular location is the myofibril. It is found in the sarcomere. It localises to the a band. The protein resides in the i band. Functionally, substrate-specific adapter of a BCR (BTB-CUL3-RBX1) E3 ubiquitin ligase complex. Required for skeletal muscle development. The polypeptide is Kelch-like protein 40a (klhl40a) (Danio rerio (Zebrafish)).